A 234-amino-acid chain; its full sequence is Uridylate kinase (234 aa).

Position 9 to 12 (lysine 9 to glycine 12) interacts with ATP. Glycine 51 lines the UMP pocket. ATP contacts are provided by glycine 52 and arginine 56. UMP contacts are provided by residues aspartate 71 and cysteine 132–threonine 139. Residues threonine 159, tyrosine 165, and aspartate 168 each coordinate ATP.

Belongs to the UMP kinase family. In terms of assembly, homohexamer.

Its subcellular location is the cytoplasm. It carries out the reaction UMP + ATP = UDP + ADP. It functions in the pathway pyrimidine metabolism; CTP biosynthesis via de novo pathway; UDP from UMP (UMPK route): step 1/1. Inhibited by UTP. Functionally, catalyzes the reversible phosphorylation of UMP to UDP. This is Uridylate kinase from Prochlorococcus marinus (strain MIT 9312).